The chain runs to 83 residues: Subtilisin-chymotrypsin inhibitor CI-1A (83 aa).

The segment at 1–24 (MSSMEGSVLKYPEPTEGSIGASSA) is disordered.

This sequence belongs to the protease inhibitor I13 (potato type I serine protease inhibitor) family.

Inhibits both subtilisin and chymotrypsin. In Hordeum vulgare (Barley), this protein is Subtilisin-chymotrypsin inhibitor CI-1A.